We begin with the raw amino-acid sequence, 152 residues long: Endoribonuclease YbeY (152 aa).

Histidine 113, histidine 117, and histidine 123 together coordinate Zn(2+).

Belongs to the endoribonuclease YbeY family. The cofactor is Zn(2+).

It is found in the cytoplasm. Its function is as follows. Single strand-specific metallo-endoribonuclease involved in late-stage 70S ribosome quality control and in maturation of the 3' terminus of the 16S rRNA. This is Endoribonuclease YbeY from Paracidovorax citrulli (strain AAC00-1) (Acidovorax citrulli).